The chain runs to 119 residues: Dolichyl-diphosphooligosaccharide--protein glycosyltransferase subunit DAD1 (119 aa).

Ser2 carries the post-translational modification N-acetylserine. Residues 2 to 30 lie on the Cytoplasmic side of the membrane; the sequence is SASVASVISRFLEEYLSSTPQRLKLLDAY. The chain crosses the membrane as a helical span at residues 31 to 51; sequence LLYILLTGALQFGYCLLVGTF. The Lumenal portion of the chain corresponds to 52 to 54; that stretch reads PFN. Residues 55–75 traverse the membrane as a helical segment; sequence SFLSGFISCVGSFILAGNGSL. Residues 76–81 lie on the Cytoplasmic side of the membrane; that stretch reads RNRSNN. A helical transmembrane segment spans residues 82-98; that stretch reads VFTLVRCFSSLVTLFYS. Residues 99-119 are Lumenal-facing; that stretch reads RSPPREVPRGACIALFCERGN.

Belongs to the DAD/OST2 family. As to quaternary structure, component of the oligosaccharyltransferase (OST) complex. OST exists in two different complex forms which contain common core subunits RPN1, RPN2, OST48, OST4, DAD1 and TMEM258, either STT3A or STT3B as catalytic subunits, and form-specific accessory subunits. STT3A complex assembly occurs through the formation of 3 subcomplexes. Subcomplex 1 contains RPN1 and TMEM258, subcomplex 2 contains the STT3A-specific subunits STT3A, DC2/OSTC, and KCP2 as well as the core subunit OST4, and subcomplex 3 contains RPN2, DAD1, and OST48. The STT3A complex can form stable complexes with the Sec61 complex or with both the Sec61 and TRAP complexes.

Its subcellular location is the endoplasmic reticulum membrane. It participates in protein modification; protein glycosylation. Functionally, subunit of the oligosaccharyl transferase (OST) complex that catalyzes the initial transfer of a defined glycan (Glc(3)Man(9)GlcNAc(2) in eukaryotes) from the lipid carrier dolichol-pyrophosphate to an asparagine residue within an Asn-X-Ser/Thr consensus motif in nascent polypeptide chains, the first step in protein N-glycosylation. N-glycosylation occurs cotranslationally and the complex associates with the Sec61 complex at the channel-forming translocon complex that mediates protein translocation across the endoplasmic reticulum (ER). All subunits are required for a maximal enzyme activity. The protein is Dolichyl-diphosphooligosaccharide--protein glycosyltransferase subunit DAD1 of Canis lupus familiaris (Dog).